We begin with the raw amino-acid sequence, 486 residues long: UDP-N-acetylmuramoyl-L-alanyl-D-glutamate--2,6-diaminopimelate ligase (486 aa).

Serine 31 provides a ligand contact to UDP-N-acetyl-alpha-D-muramoyl-L-alanyl-D-glutamate. An ATP-binding site is contributed by 109–115 (GTNGKTT). Residues asparagine 150, 151–152 (TT), serine 178, and arginine 186 each bind UDP-N-acetyl-alpha-D-muramoyl-L-alanyl-D-glutamate. Lysine 218 bears the N6-carboxylysine mark. Meso-2,6-diaminopimelate is bound by residues arginine 381, 405 to 408 (DNPR), glycine 455, and glutamate 459. Residues 405-408 (DNPR) carry the Meso-diaminopimelate recognition motif motif.

The protein belongs to the MurCDEF family. MurE subfamily. Mg(2+) serves as cofactor. Carboxylation is probably crucial for Mg(2+) binding and, consequently, for the gamma-phosphate positioning of ATP.

It is found in the cytoplasm. The enzyme catalyses UDP-N-acetyl-alpha-D-muramoyl-L-alanyl-D-glutamate + meso-2,6-diaminopimelate + ATP = UDP-N-acetyl-alpha-D-muramoyl-L-alanyl-gamma-D-glutamyl-meso-2,6-diaminopimelate + ADP + phosphate + H(+). The protein operates within cell wall biogenesis; peptidoglycan biosynthesis. In terms of biological role, catalyzes the addition of meso-diaminopimelic acid to the nucleotide precursor UDP-N-acetylmuramoyl-L-alanyl-D-glutamate (UMAG) in the biosynthesis of bacterial cell-wall peptidoglycan. In Halalkalibacterium halodurans (strain ATCC BAA-125 / DSM 18197 / FERM 7344 / JCM 9153 / C-125) (Bacillus halodurans), this protein is UDP-N-acetylmuramoyl-L-alanyl-D-glutamate--2,6-diaminopimelate ligase.